A 593-amino-acid chain; its full sequence is Aspartate--tRNA(Asp/Asn) ligase (593 aa).

Residue E182 participates in L-aspartate binding. The interval Q206–K209 is aspartate. R228 contacts L-aspartate. ATP-binding positions include R228–E230 and Q237. H455 is a binding site for L-aspartate. E489 lines the ATP pocket. An L-aspartate-binding site is contributed by R496. G541–R544 is an ATP binding site.

The protein belongs to the class-II aminoacyl-tRNA synthetase family. Type 1 subfamily. In terms of assembly, homodimer.

Its subcellular location is the cytoplasm. The enzyme catalyses tRNA(Asx) + L-aspartate + ATP = L-aspartyl-tRNA(Asx) + AMP + diphosphate. Aspartyl-tRNA synthetase with relaxed tRNA specificity since it is able to aspartylate not only its cognate tRNA(Asp) but also tRNA(Asn). Reaction proceeds in two steps: L-aspartate is first activated by ATP to form Asp-AMP and then transferred to the acceptor end of tRNA(Asp/Asn). The polypeptide is Aspartate--tRNA(Asp/Asn) ligase (Geotalea uraniireducens (strain Rf4) (Geobacter uraniireducens)).